We begin with the raw amino-acid sequence, 303 residues long: Acetylglutamate kinase (303 aa).

Residues 73–74, R95, and N194 contribute to the substrate site; that span reads GG.

It belongs to the acetylglutamate kinase family. ArgB subfamily.

Its subcellular location is the cytoplasm. It carries out the reaction N-acetyl-L-glutamate + ATP = N-acetyl-L-glutamyl 5-phosphate + ADP. It participates in amino-acid biosynthesis; L-arginine biosynthesis; N(2)-acetyl-L-ornithine from L-glutamate: step 2/4. Catalyzes the ATP-dependent phosphorylation of N-acetyl-L-glutamate. The protein is Acetylglutamate kinase of Saccharopolyspora erythraea (strain ATCC 11635 / DSM 40517 / JCM 4748 / NBRC 13426 / NCIMB 8594 / NRRL 2338).